We begin with the raw amino-acid sequence, 310 residues long: HPr kinase/phosphorylase (310 aa).

Catalysis depends on residues histidine 138 and lysine 159. 153 to 160 contributes to the ATP binding site; it reads GASGIGKS. Serine 160 contacts Mg(2+). Aspartate 177 acts as the Proton acceptor; for phosphorylation activity. Proton donor; for dephosphorylation activity in catalysis. The segment at 201 to 210 is important for the catalytic mechanism of both phosphorylation and dephosphorylation; sequence IEIRGVGIID. A Mg(2+)-binding site is contributed by glutamate 202. The active site involves arginine 243. Positions 264–269 are important for the catalytic mechanism of dephosphorylation; sequence PVKTGR.

This sequence belongs to the HPrK/P family. As to quaternary structure, homohexamer. Requires Mg(2+) as cofactor.

It carries out the reaction [HPr protein]-L-serine + ATP = [HPr protein]-O-phospho-L-serine + ADP + H(+). It catalyses the reaction [HPr protein]-O-phospho-L-serine + phosphate + H(+) = [HPr protein]-L-serine + diphosphate. Its function is as follows. Catalyzes the ATP- as well as the pyrophosphate-dependent phosphorylation of a specific serine residue in HPr, a phosphocarrier protein of the phosphoenolpyruvate-dependent sugar phosphotransferase system (PTS). HprK/P also catalyzes the pyrophosphate-producing, inorganic phosphate-dependent dephosphorylation (phosphorolysis) of seryl-phosphorylated HPr (P-Ser-HPr). The two antagonistic activities of HprK/P are regulated by several intracellular metabolites, which change their concentration in response to the absence or presence of rapidly metabolisable carbon sources (glucose, fructose, etc.) in the growth medium. Therefore, by controlling the phosphorylation state of HPr, HPrK/P is a sensor enzyme that plays a major role in the regulation of carbon metabolism and sugar transport: it mediates carbon catabolite repression (CCR), and regulates PTS-catalyzed carbohydrate uptake and inducer exclusion. The sequence is that of HPr kinase/phosphorylase from Lactococcus lactis subsp. cremoris (strain SK11).